A 270-amino-acid chain; its full sequence is Acetylglutamate kinase (270 aa).

Residues 41-42 (GG), Arg-63, and Asn-166 each bind substrate.

The protein belongs to the acetylglutamate kinase family. ArgB subfamily.

Its subcellular location is the cytoplasm. It carries out the reaction N-acetyl-L-glutamate + ATP = N-acetyl-L-glutamyl 5-phosphate + ADP. It functions in the pathway amino-acid biosynthesis; L-arginine biosynthesis; N(2)-acetyl-L-ornithine from L-glutamate: step 2/4. Catalyzes the ATP-dependent phosphorylation of N-acetyl-L-glutamate. This is Acetylglutamate kinase from Anaeromyxobacter dehalogenans (strain 2CP-C).